Here is a 234-residue protein sequence, read N- to C-terminus: Sugar fermentation stimulation protein A (234 aa).

The segment at residues 201-220 (LLSEAQNKGVEVLAYKAELS) is a DNA-binding region (H-T-H motif).

It belongs to the SfsA family.

Functionally, binds to DNA non-specifically. Could be a regulatory factor involved in maltose metabolism. This chain is Sugar fermentation stimulation protein A, found in Salmonella dublin (strain CT_02021853).